A 460-amino-acid polypeptide reads, in one-letter code: UDP-N-acetylmuramoyl-tripeptide--D-alanyl-D-alanine ligase (460 aa).

115 to 121 contacts ATP; that stretch reads GSSGKTS.

This sequence belongs to the MurCDEF family. MurF subfamily.

The protein localises to the cytoplasm. It carries out the reaction D-alanyl-D-alanine + UDP-N-acetyl-alpha-D-muramoyl-L-alanyl-gamma-D-glutamyl-meso-2,6-diaminopimelate + ATP = UDP-N-acetyl-alpha-D-muramoyl-L-alanyl-gamma-D-glutamyl-meso-2,6-diaminopimeloyl-D-alanyl-D-alanine + ADP + phosphate + H(+). It participates in cell wall biogenesis; peptidoglycan biosynthesis. In terms of biological role, involved in cell wall formation. Catalyzes the final step in the synthesis of UDP-N-acetylmuramoyl-pentapeptide, the precursor of murein. The sequence is that of UDP-N-acetylmuramoyl-tripeptide--D-alanyl-D-alanine ligase from Buchnera aphidicola subsp. Baizongia pistaciae (strain Bp).